We begin with the raw amino-acid sequence, 360 residues long: Phospho-N-acetylmuramoyl-pentapeptide-transferase (360 aa).

Transmembrane regions (helical) follow at residues 16–36 (FAVF…ALVL), 73–93 (TMGG…WADL), 97–117 (YVWV…VDDY), 134–154 (YFWQ…TAST), 168–188 (YSIP…VGSS), 199–219 (GLAI…CYLS), 236–256 (AGEL…FLWF), 263–283 (VFMG…IAVI), 288–308 (IVLF…VIQV), and 338–358 (VIVR…ATLK).

Belongs to the glycosyltransferase 4 family. MraY subfamily. Mg(2+) serves as cofactor.

Its subcellular location is the cell inner membrane. It catalyses the reaction UDP-N-acetyl-alpha-D-muramoyl-L-alanyl-gamma-D-glutamyl-meso-2,6-diaminopimeloyl-D-alanyl-D-alanine + di-trans,octa-cis-undecaprenyl phosphate = di-trans,octa-cis-undecaprenyl diphospho-N-acetyl-alpha-D-muramoyl-L-alanyl-D-glutamyl-meso-2,6-diaminopimeloyl-D-alanyl-D-alanine + UMP. It functions in the pathway cell wall biogenesis; peptidoglycan biosynthesis. Functionally, catalyzes the initial step of the lipid cycle reactions in the biosynthesis of the cell wall peptidoglycan: transfers peptidoglycan precursor phospho-MurNAc-pentapeptide from UDP-MurNAc-pentapeptide onto the lipid carrier undecaprenyl phosphate, yielding undecaprenyl-pyrophosphoryl-MurNAc-pentapeptide, known as lipid I. This chain is Phospho-N-acetylmuramoyl-pentapeptide-transferase, found in Pseudomonas fluorescens (strain Pf0-1).